Here is a 436-residue protein sequence, read N- to C-terminus: Antilisterial bacteriocin subtilosin biosynthesis protein AlbD (436 aa).

The next 10 membrane-spanning stretches (helical) occupy residues 27–47, 51–71, 112–132, 134–154, 166–186, 187–207, 240–260, 270–290, 315–335, and 395–415; these read IAAG…QAGI, VLGK…MVFL, TLFF…SGAQ, LFWL…GVML, FLLH…MPAV, TIPL…PVFL, AMLL…FQMM, IYIV…LYSI, FYSG…GFIS, and ATLA…LIIV.

The protein resides in the cell membrane. Its function is as follows. Involved in the production of the bacteriocin subtilosin. Required for immunity to subtilosin. This is Antilisterial bacteriocin subtilosin biosynthesis protein AlbD (albD) from Bacillus subtilis.